Here is a 335-residue protein sequence, read N- to C-terminus: DNA polymerase beta (335 aa).

Residue Lys41 forms a Glycyl lysine isopeptide (Lys-Gly) (interchain with G-Cter in ubiquitin) linkage. Residue Lys60 coordinates K(+). Lys60 is a Na(+) binding site. A Glycyl lysine isopeptide (Lys-Gly) (interchain with G-Cter in ubiquitin) cross-link involves residue Lys61. Residues Leu62 and Val65 each coordinate K(+). Leu62 and Val65 together coordinate Na(+). The active-site Nucleophile; Schiff-base intermediate with DNA; for 5'-dRP lyase activity is the Lys72. N6-acetyllysine is present on Lys72. A Glycyl lysine isopeptide (Lys-Gly) (interchain with G-Cter in ubiquitin) cross-link involves residue Lys81. Arg83 carries the post-translational modification Omega-N-methylarginine; by PRMT6. K(+) is bound by residues Thr101, Val103, and Ile106. Thr101, Val103, and Ile106 together coordinate Na(+). Arg149 contributes to the a 2'-deoxyribonucleoside 5'-triphosphate binding site. At Arg152 the chain carries Omega-N-methylarginine; by PRMT6. A 2'-deoxyribonucleoside 5'-triphosphate contacts are provided by Ser180, Arg183, Gly189, and Asp190. Residues 183–192 (RGAESSGDMD) form a DNA-binding region. Residues Asp190, Asp192, and Asp256 each contribute to the Mg(2+) site.

The protein belongs to the DNA polymerase type-X family. As to quaternary structure, monomer. Binds single-stranded DNA (ssDNA). Interacts with APEX1, LIG1, LIG3, FEN1, PCNA and XRCC1. Interacts with HUWE1/ARF-BP1, STUB1/CHIP and USP47. Interacts with FAM168A. It depends on Mg(2+) as a cofactor. In terms of processing, methylation by PRMT6 stimulates the polymerase activity by enhancing DNA binding and processivity. Post-translationally, ubiquitinated at Lys-41, Lys-61 and Lys-81: monoubiquitinated by HUWE1/ARF-BP1. Monoubiquitinated protein is then the target of STUB1/CHIP, which catalyzes polyubiquitination from monoubiquitin, leading to degradation by the proteasome. USP47 mediates the deubiquitination of monoubiquitinated protein, preventing polyubiquitination by STUB1/CHIP and its subsequent degradation.

Its subcellular location is the nucleus. It is found in the cytoplasm. It catalyses the reaction DNA(n) + a 2'-deoxyribonucleoside 5'-triphosphate = DNA(n+1) + diphosphate. The enzyme catalyses a 5'-end 2'-deoxyribose-2'-deoxyribonucleotide-DNA = (2E,4S)-4-hydroxypenten-2-al-5-phosphate + a 5'-end 5'-phospho-2'-deoxyribonucleoside-DNA + H(+). The catalysed reaction is 2'-deoxyribonucleotide-(2'-deoxyribose 5'-phosphate)-2'-deoxyribonucleotide-DNA = a 3'-end 2'-deoxyribonucleotide-(2,3-dehydro-2,3-deoxyribose 5'-phosphate)-DNA + a 5'-end 5'-phospho-2'-deoxyribonucleoside-DNA + H(+). In terms of biological role, repair polymerase that plays a key role in base-excision repair. During this process, the damaged base is excised by specific DNA glycosylases, the DNA backbone is nicked at the abasic site by an apurinic/apyrimidic (AP) endonuclease, and POLB removes 5'-deoxyribose-phosphate from the preincised AP site acting as a 5'-deoxyribose-phosphate lyase (5'-dRP lyase); through its DNA polymerase activity, it adds one nucleotide to the 3' end of the arising single-nucleotide gap. Conducts 'gap-filling' DNA synthesis in a stepwise distributive fashion rather than in a processive fashion as for other DNA polymerases. It is also able to cleave sugar-phosphate bonds 3' to an intact AP site, acting as an AP lyase. This Rattus norvegicus (Rat) protein is DNA polymerase beta (Polb).